The sequence spans 1429 residues: Dicer-like protein 2 (1429 aa).

In terms of domain architecture, Helicase ATP-binding spans 21-200 (MFEASLKGNI…TIEMNLNSVC (180 aa)). 34-41 (MGTGSGKT) contributes to the ATP binding site. Positions 141–144 (DEAH) match the DEAH box motif. The Helicase C-terminal domain maps to 335–501 (ALISFLMSTE…EDRRRTEELR (167 aa)). Positions 528–622 (AMQHLVHFCD…LPLTKSREFT (95 aa)) constitute a Dicer dsRNA-binding fold domain. 2 consecutive RNase III domains span residues 874-1014 (ATRL…IDGG) and 1056-1250 (QENL…VDSG). Mg(2+) contacts are provided by E1095, D1236, and E1239.

The protein belongs to the helicase family. Dicer subfamily. Requires Mg(2+) as cofactor. The cofactor is Mn(2+).

In terms of biological role, dicer-like endonuclease involved in cleaving double-stranded RNA in the RNA interference (RNAi) pathway. Produces 21 to 25 bp dsRNAs (siRNAs) which target the selective destruction of homologous RNAs leading to sequence-specific suppression of gene expression, called post-transcriptional gene silencing (PTGS). Part of a broad host defense response against viral infection and transposons. In Emericella nidulans (strain FGSC A4 / ATCC 38163 / CBS 112.46 / NRRL 194 / M139) (Aspergillus nidulans), this protein is Dicer-like protein 2 (dcl2).